Here is a 419-residue protein sequence, read N- to C-terminus: Putative polyketide beta-ketoacyl synthase 2 (419 aa).

Residues 10–413 enclose the Ketosynthase family 3 (KS3) domain; that stretch reads TRRTAVTGIG…GSNAALVLRP (404 aa).

Belongs to the thiolase-like superfamily. Beta-ketoacyl-ACP synthases family.

It functions in the pathway antibiotic biosynthesis; curamycin biosynthesis. The sequence is that of Putative polyketide beta-ketoacyl synthase 2 (curB) from Streptomyces cyaneus (Streptomyces curacoi).